Here is a 352-residue protein sequence, read N- to C-terminus: MVPLVRGAGGSHQWLAAVLLGLCCLLPAGRLAAPGGDFPGAAADSLVVRKGDTAVLRCYLEDGASKGAWLNRSSIIFAGSDKWSVDPRVSIATANRREYSLQIQDVDVTDDGPYTCSVQTQHTPRTMQVHLTVQVSPKIFRISSDIVVNEGSNVTLVCLATGKPEPSISWRHISPSAKPFESGQYLDIYGITRDQAGEYECSAENDVSVPDVKKVKVTVNFAPTIQELKSSGVMLGGNGLIRCEGAGVPAPVFEWYRGERKLISGQQGITIKNYSTRSLLTVTNVTEEHFGNYTCVAANKLGMTNASLPLNPPSTAQYGITGDAEVLFSCWYLVLTLSSLTSIFYLKNIILH.

Positions 1–35 are cleaved as a signal peptide; sequence MVPLVRGAGGSHQWLAAVLLGLCCLLPAGRLAAPG. Ig-like C2-type domains are found at residues 36–132, 137–219, and 223–311; these read GDFP…VHLT, PKIF…KVTV, and PTIQ…LPLN. The cysteines at positions 58 and 116 are disulfide-linked. N-linked (GlcNAc...) asparagine glycans are attached at residues Asn71 and Asn153. Cystine bridges form between Cys158/Cys201 and Cys243/Cys295. Asn273, Asn284, Asn292, and Asn305 each carry an N-linked (GlcNAc...) asparagine glycan. A lipid anchor (GPI-anchor amidated glycine) is attached at Gly322. Residues 323–352 constitute a propeptide, removed in mature form; the sequence is DAEVLFSCWYLVLTLSSLTSIFYLKNIILH.

The protein belongs to the immunoglobulin superfamily. IgLON family. In terms of assembly, interacts with CEPU-1 and LAMP. Post-translationally, glycosylated. Expressed in embryonic retina, telencephalon, tectum, cerebellum and diencephalon (at protein level).

The protein localises to the cell membrane. In terms of biological role, may be involved in cell-adhesion. May participate in the regulation of neurite outgrowth in the developing brain. The protein is Neuronal growth regulator 1 (NEGR1) of Gallus gallus (Chicken).